A 111-amino-acid chain; its full sequence is Small ribosomal subunit protein uS10 (111 aa).

The protein belongs to the universal ribosomal protein uS10 family. Part of the 30S ribosomal subunit.

In terms of biological role, involved in the binding of tRNA to the ribosomes. The chain is Small ribosomal subunit protein uS10 from Xanthomonas euvesicatoria pv. vesicatoria (strain 85-10) (Xanthomonas campestris pv. vesicatoria).